Reading from the N-terminus, the 448-residue chain is Probable glycine dehydrogenase (decarboxylating) subunit 1 (448 aa).

This sequence belongs to the GcvP family. N-terminal subunit subfamily. The glycine cleavage system is composed of four proteins: P, T, L and H. In this organism, the P 'protein' is a heterodimer of two subunits.

It catalyses the reaction N(6)-[(R)-lipoyl]-L-lysyl-[glycine-cleavage complex H protein] + glycine + H(+) = N(6)-[(R)-S(8)-aminomethyldihydrolipoyl]-L-lysyl-[glycine-cleavage complex H protein] + CO2. Functionally, the glycine cleavage system catalyzes the degradation of glycine. The P protein binds the alpha-amino group of glycine through its pyridoxal phosphate cofactor; CO(2) is released and the remaining methylamine moiety is then transferred to the lipoamide cofactor of the H protein. In Parvibaculum lavamentivorans (strain DS-1 / DSM 13023 / NCIMB 13966), this protein is Probable glycine dehydrogenase (decarboxylating) subunit 1.